Consider the following 427-residue polypeptide: 3-phosphoshikimate 1-carboxyvinyltransferase (427 aa).

3-phosphoshikimate is bound by residues lysine 22, serine 23, and arginine 27. Lysine 22 provides a ligand contact to phosphoenolpyruvate. Phosphoenolpyruvate is bound by residues glycine 93 and arginine 122. 4 residues coordinate 3-phosphoshikimate: serine 167, glutamine 169, aspartate 315, and lysine 342. Residue glutamine 169 participates in phosphoenolpyruvate binding. The active-site Proton acceptor is aspartate 315. Arginine 346 and arginine 387 together coordinate phosphoenolpyruvate.

Belongs to the EPSP synthase family. As to quaternary structure, monomer.

The protein localises to the cytoplasm. The catalysed reaction is 3-phosphoshikimate + phosphoenolpyruvate = 5-O-(1-carboxyvinyl)-3-phosphoshikimate + phosphate. It functions in the pathway metabolic intermediate biosynthesis; chorismate biosynthesis; chorismate from D-erythrose 4-phosphate and phosphoenolpyruvate: step 6/7. Its function is as follows. Catalyzes the transfer of the enolpyruvyl moiety of phosphoenolpyruvate (PEP) to the 5-hydroxyl of shikimate-3-phosphate (S3P) to produce enolpyruvyl shikimate-3-phosphate and inorganic phosphate. The sequence is that of 3-phosphoshikimate 1-carboxyvinyltransferase from Thermus thermophilus (strain ATCC 27634 / DSM 579 / HB8).